The chain runs to 394 residues: ATP phosphoribosyltransferase regulatory subunit (394 aa).

This sequence belongs to the class-II aminoacyl-tRNA synthetase family. HisZ subfamily. As to quaternary structure, heteromultimer composed of HisG and HisZ subunits.

It localises to the cytoplasm. It participates in amino-acid biosynthesis; L-histidine biosynthesis; L-histidine from 5-phospho-alpha-D-ribose 1-diphosphate: step 1/9. Functionally, required for the first step of histidine biosynthesis. May allow the feedback regulation of ATP phosphoribosyltransferase activity by histidine. The chain is ATP phosphoribosyltransferase regulatory subunit from Teredinibacter turnerae (strain ATCC 39867 / T7901).